Reading from the N-terminus, the 111-residue chain is Protein RnfH (111 aa).

Residues 88–111 form a disordered region; the sequence is RRRRVQKTRESGTREGQKWLRGGA. Residues 94-105 are compositionally biased toward basic and acidic residues; the sequence is KTRESGTREGQK.

Belongs to the UPF0125 (RnfH) family.

This Cupriavidus pinatubonensis (strain JMP 134 / LMG 1197) (Cupriavidus necator (strain JMP 134)) protein is Protein RnfH.